A 460-amino-acid chain; its full sequence is Ribulose bisphosphate carboxylase (460 aa).

Residue Asn112 participates in substrate binding. Lys167 serves as the catalytic Proton acceptor. Lys169 is a substrate binding site. Mg(2+)-binding residues include Lys192, Asp194, and Glu195. Position 192 is an N6-carboxylysine (Lys192). His288 acts as the Proton acceptor in catalysis. Substrate-binding residues include Arg289, His322, and Ser369.

This sequence belongs to the RuBisCO large chain family. Type II subfamily. Homodimer. The cofactor is Mg(2+).

The catalysed reaction is 2 (2R)-3-phosphoglycerate + 2 H(+) = D-ribulose 1,5-bisphosphate + CO2 + H2O. The enzyme catalyses D-ribulose 1,5-bisphosphate + O2 = 2-phosphoglycolate + (2R)-3-phosphoglycerate + 2 H(+). Functionally, ruBisCO catalyzes two reactions: the carboxylation of D-ribulose 1,5-bisphosphate, the primary event in carbon dioxide fixation, as well as the oxidative fragmentation of the pentose substrate. Both reactions occur simultaneously and in competition at the same active site. The protein is Ribulose bisphosphate carboxylase of Rhodopseudomonas palustris (strain BisA53).